The primary structure comprises 381 residues: DNA primase DnaG (381 aa).

Residues 173-259 (DAILVVEGRS…EVEDLEKDEI (87 aa)) enclose the Toprim domain. 3 residues coordinate Mg(2+): Glu-179, Asp-221, and Asp-223.

The protein belongs to the archaeal DnaG primase family. As to quaternary structure, forms a ternary complex with MCM helicase and DNA. Component of the archaeal exosome complex. It depends on Mg(2+) as a cofactor.

It catalyses the reaction ssDNA + n NTP = ssDNA/pppN(pN)n-1 hybrid + (n-1) diphosphate.. RNA polymerase that catalyzes the synthesis of short RNA molecules used as primers for DNA polymerase during DNA replication. Also part of the exosome, which is a complex involved in RNA degradation. Acts as a poly(A)-binding protein that enhances the interaction between heteromeric, adenine-rich transcripts and the exosome. The chain is DNA primase DnaG from Methanothermobacter thermautotrophicus (strain ATCC 29096 / DSM 1053 / JCM 10044 / NBRC 100330 / Delta H) (Methanobacterium thermoautotrophicum).